Consider the following 912-residue polypeptide: Accessory gland protein Acp36DE (912 aa).

The first 23 residues, 1-23 (MWTLTCQQFIALILLGTLVPSES), serve as a signal peptide directing secretion. Low complexity-rich tracts occupy residues 193-220 (QSQSQTQSQSASQSESNASSQFQAQEQS), 230-255 (SESQSQSESQSQSESQKQSQSQSQRQ), 271-324 (KSNE…GLQQ), and 521-544 (QSQLQESKSNSLSQSQSQSQEQLQ). Disordered regions lie at residues 193 to 255 (QSQS…SQRQ), 271 to 349 (KSNE…QKQL), 518 to 544 (TQTQSQLQESKSNSLSQSQSQSQEQLQ), 638 to 671 (PSEGKPAPGNQGPSIEPKLVPQPGSLDKLPSGGG), and 732 to 912 (GQQQ…NLSG). 2 stretches are compositionally biased toward low complexity: residues 732-757 (GQQQKEQQAQESINKQQSSSAGSSSQ) and 765-785 (QSTGAQGSQQGLQAGSTGLQT). Residues 803–818 (RLKEQEQLRIQTENDQ) are compositionally biased toward basic and acidic residues. A compositionally biased stretch (low complexity) spans 821–845 (SSSSSHSNSQNSQSSSSQSSQASQS). Positions 851 to 861 (EAGNRNTLLLD) are enriched in polar residues. The span at 862–897 (QSSSKTQSESKSESSSQSSSHSSSQSTSNSSSNVQS) shows a compositional bias: low complexity. The segment covering 898-912 (KLQGESQALLNNLSG) has biased composition (polar residues).

Post-translationally, proteolytically cleaved by the seminal metalloprotease Semp1. Cleavage appears to take place in the mated female. Detected in the male accessory glands (at protein level). Produced in the accessory glands and secreted into seminal fluid.

Its subcellular location is the secreted. Its function is as follows. Responsible for physiological and behavioral changes in mated female flies. Associates with sperm and localizes to specific regions of the female reproductive tract, including the sperm storage organs. It accelerates sperm accumulation into storage but does not mediate the entry of the first sperm into storage. Once sperm storage has initiated it seems to act as a guidance factor helping subsequent sperm move into storage, a corral concentrating sperm around the SSO entrances and/or a trigger for responses within the female that accelerate storage of sperm. This chain is Accessory gland protein Acp36DE (Acp36DE), found in Drosophila melanogaster (Fruit fly).